Reading from the N-terminus, the 358-residue chain is Alanine racemase (358 aa).

K35 serves as the catalytic Proton acceptor; specific for D-alanine. Position 35 is an N6-(pyridoxal phosphate)lysine (K35). Substrate is bound at residue R130. Y255 functions as the Proton acceptor; specific for L-alanine in the catalytic mechanism. M303 serves as a coordination point for substrate.

This sequence belongs to the alanine racemase family. Pyridoxal 5'-phosphate serves as cofactor.

The enzyme catalyses L-alanine = D-alanine. The protein operates within amino-acid biosynthesis; D-alanine biosynthesis; D-alanine from L-alanine: step 1/1. Its function is as follows. Catalyzes the interconversion of L-alanine and D-alanine. May also act on other amino acids. This is Alanine racemase (alr) from Shewanella baltica (strain OS195).